Consider the following 244-residue polypeptide: uncharacterized protein (244 aa).

This is an uncharacterized protein from Ostreid herpesvirus 1 (isolate France) (OsHV-1).